We begin with the raw amino-acid sequence, 187 residues long: Large ribosomal subunit protein bL12cx (187 aa).

The transit peptide at 1-54 (MASTTLSIATTIRSSSPLTSASTHHFLSKPTAIEFPFRLSSSSSHRAINLRPIS) directs the protein to the chloroplast.

This sequence belongs to the bacterial ribosomal protein bL12 family.

The protein resides in the plastid. It localises to the chloroplast. The protein is Large ribosomal subunit protein bL12cx (RPL12C) of Arabidopsis thaliana (Mouse-ear cress).